A 700-amino-acid polypeptide reads, in one-letter code: Polyribonucleotide nucleotidyltransferase (700 aa).

Residues Asp-491 and Asp-497 each coordinate Mg(2+). In terms of domain architecture, KH spans 558-617; that stretch reads PNYAVIEINPDKIRDVIGKGGATIRQLTEETGAVIDIDDAGTIRIFGENKAATKAAIAKI. In terms of domain architecture, S1 motif spans 627-695; that stretch reads GKTYEGTVAR…NRGRIKLTMK (69 aa).

It belongs to the polyribonucleotide nucleotidyltransferase family. As to quaternary structure, component of the RNA degradosome, which is a multiprotein complex involved in RNA processing and mRNA degradation. It depends on Mg(2+) as a cofactor.

Its subcellular location is the cytoplasm. It catalyses the reaction RNA(n+1) + phosphate = RNA(n) + a ribonucleoside 5'-diphosphate. In terms of biological role, involved in mRNA degradation. Catalyzes the phosphorolysis of single-stranded polyribonucleotides processively in the 3'- to 5'-direction. The chain is Polyribonucleotide nucleotidyltransferase from Psychrobacter arcticus (strain DSM 17307 / VKM B-2377 / 273-4).